The chain runs to 194 residues: dTTP/UTP pyrophosphatase (194 aa).

The active-site Proton acceptor is Asp-73.

It belongs to the Maf family. YhdE subfamily. The cofactor is a divalent metal cation.

The protein localises to the cytoplasm. The catalysed reaction is dTTP + H2O = dTMP + diphosphate + H(+). The enzyme catalyses UTP + H2O = UMP + diphosphate + H(+). Nucleoside triphosphate pyrophosphatase that hydrolyzes dTTP and UTP. May have a dual role in cell division arrest and in preventing the incorporation of modified nucleotides into cellular nucleic acids. In Geotalea uraniireducens (strain Rf4) (Geobacter uraniireducens), this protein is dTTP/UTP pyrophosphatase.